Consider the following 202-residue polypeptide: MFLFAGLGNPGPKYAGNRHNIGFMALEAICRRHRLGPLRRRFQSLAAEGEIAGEKVIALFPETYMNESGRAVSEAQRFYKIPLDHIFVFHDELDLPPAKLRIKKGGGNAGHNGLRSITAQCGNDYFRVRLGIGHPGDKALVHAYVLNDFAKSEKPWLDAVCDACADFADLLAQKRPEEFQNRAHLFLDAQGFGEQKRVGEKG.

Tyrosine 14 is a binding site for tRNA. The Proton acceptor role is filled by histidine 19. Residues tyrosine 64, asparagine 66, and asparagine 112 each contribute to the tRNA site.

Belongs to the PTH family. Monomer.

Its subcellular location is the cytoplasm. It catalyses the reaction an N-acyl-L-alpha-aminoacyl-tRNA + H2O = an N-acyl-L-amino acid + a tRNA + H(+). Its function is as follows. Hydrolyzes ribosome-free peptidyl-tRNAs (with 1 or more amino acids incorporated), which drop off the ribosome during protein synthesis, or as a result of ribosome stalling. Functionally, catalyzes the release of premature peptidyl moieties from peptidyl-tRNA molecules trapped in stalled 50S ribosomal subunits, and thus maintains levels of free tRNAs and 50S ribosomes. The chain is Peptidyl-tRNA hydrolase from Xanthobacter autotrophicus (strain ATCC BAA-1158 / Py2).